Consider the following 614-residue polypeptide: Spastin (614 aa).

A disordered region spans residues 1-45; it reads MNSPGGRGKKKGSGGPSSPVPPRPPPPCQARSRPAPKPAPPPQSP. The segment at 1 to 50 is required for nuclear localization; sequence MNSPGGRGKKKGSGGPSSPVPPRPPPPCQARSRPAPKPAPPPQSPHKRNL. Residues 1–56 lie on the Cytoplasmic side of the membrane; that stretch reads MNSPGGRGKKKGSGGPSSPVPPRPPPPCQARSRPAPKPAPPPQSPHKRNLYYFSYP. Positions 1 to 80 are required for interaction with ATL1; it reads MNSPGGRGKK…LGLLFVWLCQ (80 aa). The interval 1–192 is required for midbody localization; sequence MNSPGGRGKK…LVMAKDRLQL (192 aa). Positions 1-298 are required for interaction with RTN1; sequence MNSPGGRGKK…STPKTNRTNK (298 aa). The short motif at 4–11 is the Nuclear localization signal element; the sequence is PGGRGKKK. Pro residues-rich tracts occupy residues 18-28 and 35-44; these read SPVPPRPPPPC and APKPAPPPQS. Residues 50–87 are required for interaction with SSNA1 and microtubules; that stretch reads LYYFSYPLFLGFALLRLVAFHLGLLFVWLCQRFSRALM. The helical intramembrane region spans 57 to 77; sequence LFLGFALLRLVAFHLGLLFVW. Residues 59 to 67 carry the Nuclear export signal motif; that stretch reads LGFALLRLV. Over 78–614 the chain is Cytoplasmic; sequence LCQRFSRALM…WNKDFGDTTV (537 aa). The segment at 110 to 194 is sufficient for interaction with CHMP1B; the sequence is EAERVRAFHK…MAKDRLQLLE (85 aa). The required for interaction with microtubules stretch occupies residues 112–198; it reads ERVRAFHKQA…RLQLLEKLQP (87 aa). The region spanning 118 to 193 is the MIT domain; that stretch reads HKQAFEYISV…VMAKDRLQLL (76 aa). The segment at 220–310 is disordered; sequence NGHLQSESGA…TPTTAARKKK (91 aa). Residues 226–614 are sufficient for microtubule severing; that stretch reads ESGAVPKRKD…WNKDFGDTTV (389 aa). A phosphoserine mark is found at Ser243 and Ser266. The required for interaction with microtubules and microtubule severing stretch occupies residues 268-326; sequence SGLSMVSGVRQGPGSAAATHKSTPKTNRTNKPSTPTTAARKKKDLKNFRNVDSNLANLI. Polar residues predominate over residues 287-304; the sequence is HKSTPKTNRTNKPSTPTT. Thr304 carries the post-translational modification Phosphothreonine. The Nuclear localization signal motif lies at 307–310; sequence RKKK. 380-387 provides a ligand contact to ATP; the sequence is GPPGNGKT. Ser595 is modified (phosphoserine).

It belongs to the AAA ATPase family. Spastin subfamily. In terms of assembly, homohexamer. Mostly monomeric, but assembles into hexameric structure for short periods of time. Oligomerization seems to be a prerequisite for catalytic activity. Binding to ATP in a cleft between two adjacent subunits stabilizes the homohexameric form. Binds to microtubules at least in part via the alpha-tubulin and beta-tubulin tails. The hexamer adopts a ring conformation through which microtubules pass prior to being severed. Does not interact strongly with tubulin heterodimers. Interacts (via MIT domain) with CHMP1B; the interaction is direct. Interacts with SSNA1. Interacts with ATL1. Interacts with RTN1. Interacts with ZFYVE27. Interacts with REEP1. Interacts (via MIT domain) with IST1.

The protein localises to the membrane. Its subcellular location is the endoplasmic reticulum. The protein resides in the midbody. It localises to the cytoplasm. It is found in the cytoskeleton. The protein localises to the microtubule organizing center. Its subcellular location is the centrosome. The protein resides in the perinuclear region. It localises to the nucleus. It is found in the spindle. The protein localises to the cell projection. Its subcellular location is the axon. The catalysed reaction is n ATP + n H2O + a microtubule = n ADP + n phosphate + (n+1) alpha/beta tubulin heterodimers.. Its activity is regulated as follows. Allosteric enzyme with a cooperative mechanism; at least two neighbor subunits influence each other strongly in spastin hexamers. Microtubule binding promotes cooperative interactions among spastin subunits. ATP-dependent microtubule severing protein that specifically recognizes and cuts microtubules that are polyglutamylated. Preferentially recognizes and acts on microtubules decorated with short polyglutamate tails: severing activity increases as the number of glutamates per tubulin rises from one to eight, but decreases beyond this glutamylation threshold. Severing activity is not dependent on tubulin acetylation or detyrosination. Microtubule severing promotes reorganization of cellular microtubule arrays and the release of microtubules from the centrosome following nucleation. It is critical for the biogenesis and maintenance of complex microtubule arrays in axons, spindles and cilia. SPAST is involved in abscission step of cytokinesis and nuclear envelope reassembly during anaphase in cooperation with the ESCRT-III complex. Recruited at the midbody, probably by IST1, and participates in membrane fission during abscission together with the ESCRT-III complex. Recruited to the nuclear membrane by IST1 and mediates microtubule severing, promoting nuclear envelope sealing and mitotic spindle disassembly during late anaphase. Required for membrane traffic from the endoplasmic reticulum (ER) to the Golgi and endosome recycling. Recruited by IST1 to endosomes and regulates early endosomal tubulation and recycling by mediating microtubule severing. Probably plays a role in axon growth and the formation of axonal branches. The polypeptide is Spastin (Bos taurus (Bovine)).